The primary structure comprises 309 residues: Tagatose-6-phosphate kinase (309 aa).

It belongs to the carbohydrate kinase PfkB family. LacC subfamily.

It catalyses the reaction D-tagatofuranose 6-phosphate + ATP = D-tagatofuranose 1,6-bisphosphate + ADP + H(+). The protein operates within carbohydrate metabolism; D-tagatose 6-phosphate degradation; D-glyceraldehyde 3-phosphate and glycerone phosphate from D-tagatose 6-phosphate: step 1/2. This is Tagatose-6-phosphate kinase from Streptococcus pneumoniae serotype 19F (strain G54).